We begin with the raw amino-acid sequence, 970 residues long: Isoleucine--tRNA ligase (970 aa).

Positions P65–H75 match the 'HIGH' region motif. E608 is an L-isoleucyl-5'-AMP binding site. The 'KMSKS' region motif lies at K649 to S653. K652 lines the ATP pocket. Residues C943, C946, C962, and C965 each contribute to the Zn(2+) site.

It belongs to the class-I aminoacyl-tRNA synthetase family. IleS type 1 subfamily. Monomer. Zn(2+) serves as cofactor.

The protein localises to the cytoplasm. It catalyses the reaction tRNA(Ile) + L-isoleucine + ATP = L-isoleucyl-tRNA(Ile) + AMP + diphosphate. In terms of biological role, catalyzes the attachment of isoleucine to tRNA(Ile). As IleRS can inadvertently accommodate and process structurally similar amino acids such as valine, to avoid such errors it has two additional distinct tRNA(Ile)-dependent editing activities. One activity is designated as 'pretransfer' editing and involves the hydrolysis of activated Val-AMP. The other activity is designated 'posttransfer' editing and involves deacylation of mischarged Val-tRNA(Ile). The sequence is that of Isoleucine--tRNA ligase from Ruegeria pomeroyi (strain ATCC 700808 / DSM 15171 / DSS-3) (Silicibacter pomeroyi).